Here is a 156-residue protein sequence, read N- to C-terminus: ATP synthase subunit b (156 aa).

A helical membrane pass occupies residues 7–29 (LFGQTIAFAIFVWFCMKFVWPPL).

Belongs to the ATPase B chain family. As to quaternary structure, F-type ATPases have 2 components, F(1) - the catalytic core - and F(0) - the membrane proton channel. F(1) has five subunits: alpha(3), beta(3), gamma(1), delta(1), epsilon(1). F(0) has three main subunits: a(1), b(2) and c(10-14). The alpha and beta chains form an alternating ring which encloses part of the gamma chain. F(1) is attached to F(0) by a central stalk formed by the gamma and epsilon chains, while a peripheral stalk is formed by the delta and b chains.

The protein localises to the cell inner membrane. F(1)F(0) ATP synthase produces ATP from ADP in the presence of a proton or sodium gradient. F-type ATPases consist of two structural domains, F(1) containing the extramembraneous catalytic core and F(0) containing the membrane proton channel, linked together by a central stalk and a peripheral stalk. During catalysis, ATP synthesis in the catalytic domain of F(1) is coupled via a rotary mechanism of the central stalk subunits to proton translocation. Its function is as follows. Component of the F(0) channel, it forms part of the peripheral stalk, linking F(1) to F(0). This Ectopseudomonas mendocina (strain ymp) (Pseudomonas mendocina) protein is ATP synthase subunit b.